A 591-amino-acid polypeptide reads, in one-letter code: V-type ATP synthase alpha chain (591 aa).

242–249 (GPFGAGKT) provides a ligand contact to ATP.

Belongs to the ATPase alpha/beta chains family.

It carries out the reaction ATP + H2O + 4 H(+)(in) = ADP + phosphate + 5 H(+)(out). Its function is as follows. Produces ATP from ADP in the presence of a proton gradient across the membrane. The V-type alpha chain is a catalytic subunit. This chain is V-type ATP synthase alpha chain, found in Chlamydia caviae (strain ATCC VR-813 / DSM 19441 / 03DC25 / GPIC) (Chlamydophila caviae).